The following is a 194-amino-acid chain: Thymidine kinase (194 aa).

ATP is bound by residues 15–22 and 88–91; these read GSMFSGKS and DEVQ. The active-site Proton acceptor is glutamate 89. Zn(2+) contacts are provided by cysteine 145, cysteine 148, cysteine 183, and cysteine 186.

Belongs to the thymidine kinase family. Homotetramer.

It localises to the cytoplasm. The catalysed reaction is thymidine + ATP = dTMP + ADP + H(+). In Bacillus anthracis (strain A0248), this protein is Thymidine kinase.